A 213-amino-acid polypeptide reads, in one-letter code: MITIVLLILAYLLGSIPSGLWIGQVFFQINLREHGSGNTGTTNTFRILGKKAGMATFVIDFFKGTLATLLPIIFHLQGVSPLIFGLLAVIGHTFPIFAGFKGGKAVATSAGVIFGFAPIFCLYLAIIFFGALYLGSMISLSSVTASIAAVIGVLLFPLFGFILSNYDFLFIAIILALASLIIIRHKDNIARIKNKTENLVPWGLNLTHQDPKK.

Helical transmembrane passes span 2–22, 52–74, 81–100, 112–132, 143–163, and 164–184; these read ITIVLLILAYLLGSIPSGLWI, AGMATFVIDFFKGTLATLLPIIF, PLIFGLLAVIGHTFPIFAGF, VIFGFAPIFCLYLAIIFFGAL, VTASIAAVIGVLLFPLFGFIL, and SNYDFLFIAIILALASLIIIR.

It belongs to the PlsY family. In terms of assembly, probably interacts with PlsX.

The protein resides in the cell membrane. The catalysed reaction is an acyl phosphate + sn-glycerol 3-phosphate = a 1-acyl-sn-glycero-3-phosphate + phosphate. It participates in lipid metabolism; phospholipid metabolism. In terms of biological role, catalyzes the transfer of an acyl group from acyl-phosphate (acyl-PO(4)) to glycerol-3-phosphate (G3P) to form lysophosphatidic acid (LPA). This enzyme utilizes acyl-phosphate as fatty acyl donor, but not acyl-CoA or acyl-ACP. The polypeptide is Glycerol-3-phosphate acyltransferase (Streptococcus pneumoniae (strain CGSP14)).